Reading from the N-terminus, the 70-residue chain is TEFGSELKSFPEVVGKTVDQAREYFTLHYPQYDVYFLPEGSPVTLDLRYNRVRVFYNPGTNVVNHVPHVG.

Belongs to the protease inhibitor I13 (potato type I serine protease inhibitor) family.

Inhibits both elastase and cathepsin G. This chain is Eglin C, found in Hirudo medicinalis (Medicinal leech).